A 260-amino-acid chain; its full sequence is Ras-related protein Rab-26 (260 aa).

The segment at 1 to 56 (MSRKKTPKSKGGSEPATSTLPAAAAATNGPRLAHPRTVRPGPEAPPNGPPQSIRPS) is disordered. Serine 76, glycine 77, valine 78, glycine 79, lysine 80, threonine 81, cysteine 82, serine 99, and threonine 100 together coordinate GTP. Threonine 81 lines the Mg(2+) pocket. Short sequence motifs (switch) lie at residues 90–105 (GAFL…GIDF) and 123–140 (DTAG…YYRD). Residues threonine 100 and aspartate 123 each coordinate Mg(2+). Residues glycine 126, asparagine 181, lysine 182, aspartate 184, alanine 212, and arginine 213 each contribute to the GTP site. 2 S-geranylgeranyl cysteine lipidation sites follow: cysteine 257 and cysteine 258.

This sequence belongs to the small GTPase superfamily. Rab family. Interacts with ADRA2B. Interacts with RIMS1. The cofactor is Mg(2+). Detected in zymogenic cells in the stomach.

It localises to the cytoplasmic vesicle. The protein resides in the secretory vesicle membrane. Its subcellular location is the golgi apparatus membrane. It carries out the reaction GTP + H2O = GDP + phosphate + H(+). With respect to regulation, regulated by guanine nucleotide exchange factors (GEFs) which promote the exchange of bound GDP for free GTP. Regulated by GTPase activating proteins (GAPs) which increase the GTP hydrolysis activity. Inhibited by GDP dissociation inhibitors (GDIs). Its function is as follows. The small GTPases Rab are key regulators of intracellular membrane trafficking, from the formation of transport vesicles to their fusion with membranes. Rabs cycle between an inactive GDP-bound form and an active GTP-bound form that is able to recruit to membranes different set of downstream effectors directly responsible for vesicle formation, movement, tethering and fusion. RAB26 mediates transport of ADRA2A and ADRA2B from the Golgi to the cell membrane. Plays a role in the maturation of zymogenic granules and in pepsinogen secretion in the stomach. Plays a role in the secretion of amylase from acinar granules in the parotid gland. The polypeptide is Ras-related protein Rab-26 (Mus musculus (Mouse)).